Consider the following 134-residue polypeptide: UPF0412 protein YaaI (134 aa).

Residues 1-23 form the signal peptide; sequence MKSVFTISASLAISLMLCCTAQA.

Belongs to the UPF0412 family.

The sequence is that of UPF0412 protein YaaI from Escherichia coli (strain ATCC 8739 / DSM 1576 / NBRC 3972 / NCIMB 8545 / WDCM 00012 / Crooks).